We begin with the raw amino-acid sequence, 304 residues long: Glycine--tRNA ligase alpha subunit (304 aa).

Belongs to the class-II aminoacyl-tRNA synthetase family. Tetramer of two alpha and two beta subunits.

It localises to the cytoplasm. The catalysed reaction is tRNA(Gly) + glycine + ATP = glycyl-tRNA(Gly) + AMP + diphosphate. This chain is Glycine--tRNA ligase alpha subunit, found in Yersinia enterocolitica serotype O:8 / biotype 1B (strain NCTC 13174 / 8081).